A 564-amino-acid chain; its full sequence is Septation ring formation regulator EzrA (564 aa).

Residues 1–4 (MVLF) lie on the Extracellular side of the membrane. A helical membrane pass occupies residues 5–23 (IILAILVVILIAIGVLFYM). At 24-564 (RSNKRNLIEK…KHIEEQVIKE (541 aa)) the chain is on the cytoplasmic side. Coiled-coil stretches lie at residues 84 to 126 (VEEK…HQVT), 165 to 223 (EAAE…LIRE), 271 to 303 (MISRLELDEANNKLENINDKLDEMYDLIEYEVK), and 350 to 435 (VRQF…RRLL).

The protein belongs to the EzrA family.

The protein resides in the cell membrane. Its function is as follows. Negative regulator of FtsZ ring formation; modulates the frequency and position of FtsZ ring formation. Inhibits FtsZ ring formation at polar sites. Interacts either with FtsZ or with one of its binding partners to promote depolymerization. This is Septation ring formation regulator EzrA from Staphylococcus epidermidis (strain ATCC 12228 / FDA PCI 1200).